A 90-amino-acid polypeptide reads, in one-letter code: Mitochondrial import inner membrane translocase subunit Tim9 (90 aa).

A Twin CX3C motif motif is present at residues 24 to 48 (CFNSCVNEFGSRTVSGKEESCANNC). 2 disulfide bridges follow: Cys24-Cys48 and Cys28-Cys44.

The protein belongs to the small Tim family. In terms of assembly, heterohexamer; composed of 3 copies of tim-9/tin-9.1 and 3 copies of tim-10/tin-10, named soluble 70 kDa complex. The complex associates with the tim-22 component of the TIM22 complex. Interacts with multi-pass transmembrane proteins in transit.

Its subcellular location is the mitochondrion inner membrane. In terms of biological role, mitochondrial intermembrane chaperone that participates in the import and insertion of multi-pass transmembrane proteins into the mitochondrial inner membrane. May also be required for the transfer of beta-barrel precursors from the TOM complex to the sorting and assembly machinery (SAM complex) of the outer membrane. Acts as a chaperone-like protein that protects the hydrophobic precursors from aggregation and guide them through the mitochondrial intermembrane space. The sequence is that of Mitochondrial import inner membrane translocase subunit Tim9 (tin-9.1) from Caenorhabditis elegans.